A 565-amino-acid polypeptide reads, in one-letter code: Heme/hemopexin transporter protein HuxB (565 aa).

An N-terminal signal peptide occupies residues M1–A26. The region spanning F73–G150 is the POTRA domain.

Belongs to the TPS (TC 1.B.20) family.

Its subcellular location is the cell outer membrane. Likely functions in the release of soluble HxuA from the cell. Functionally, probable member of a two partner secretion pathway (TPS) in which it mediates the secretion of HuxA. In Haemophilus influenzae (strain 86-028NP), this protein is Heme/hemopexin transporter protein HuxB (hxuB).